A 101-amino-acid polypeptide reads, in one-letter code: Large ribosomal subunit protein bL28 (101 aa).

Belongs to the bacterial ribosomal protein bL28 family.

In Methylorubrum extorquens (strain CM4 / NCIMB 13688) (Methylobacterium extorquens), this protein is Large ribosomal subunit protein bL28.